Consider the following 462-residue polypeptide: Na(+)/H(+) antiporter NhaA (462 aa).

11 helical membrane-spanning segments follow: residues 24-44 (ISGL…NLPL), 66-86 (LPIG…TVGL), 102-122 (AAAV…ILFL), 156-176 (GWAV…ALFA), 196-216 (LLAI…YWFI), 235-255 (PWIA…EAGI), 256-275 (HPTL…VMHG), 290-310 (PFSA…VHFE), 312-332 (MSPL…LVVG), 361-381 (MIPA…IASL), and 392-412 (ARFG…VLLS).

This sequence belongs to the NhaA Na(+)/H(+) (TC 2.A.33) antiporter family.

The protein localises to the cell membrane. The catalysed reaction is Na(+)(in) + 2 H(+)(out) = Na(+)(out) + 2 H(+)(in). Functionally, na(+)/H(+) antiporter that extrudes sodium in exchange for external protons. This chain is Na(+)/H(+) antiporter NhaA, found in Bifidobacterium breve (strain NCIMB 8807 / UCC2003).